The chain runs to 274 residues: Large ribosomal subunit protein uL2cz/uL2cy (274 aa).

Disordered regions lie at residues 1-24 and 223-274; these read MAIH…QVKS and MNPV…RRSK. A compositionally biased stretch (polar residues) spans 7-24; the sequence is KTSTPSTRNGTVDSQVKS.

The protein belongs to the universal ribosomal protein uL2 family. Part of the 50S ribosomal subunit.

It is found in the plastid. The protein localises to the chloroplast. The chain is Large ribosomal subunit protein uL2cz/uL2cy (rpl2-A) from Nicotiana sylvestris (Wood tobacco).